We begin with the raw amino-acid sequence, 160 residues long: E3 ubiquitin ligase complex SCF subunit sconC (160 aa).

The interval Ile101–Arg160 is interaction with the F-box domain of F-box proteins.

The protein belongs to the SKP1 family. In terms of assembly, component of the SCF (SKP1-CUL1-F-box protein) E3 ubiquitin ligase complexes.

It functions in the pathway protein modification; protein ubiquitination. Functionally, essential component of the SCF (SKP1-CUL1-F-box protein) E3 ubiquitin ligase complexes, which mediate the ubiquitination and subsequent proteasomal degradation of target proteins. Controls sulfur metabolite repression, probably by mediating the inactivation or degradation of the metR transcription factor. This is E3 ubiquitin ligase complex SCF subunit sconC (sconC) from Talaromyces marneffei (strain ATCC 18224 / CBS 334.59 / QM 7333) (Penicillium marneffei).